Reading from the N-terminus, the 158-residue chain is Transcriptional repressor NrdR (158 aa).

The segment at 3-34 (CPFCSFPESRVLDSRPADEGNSIRRRRECGEC) is a zinc-finger region. The region spanning 49-139 (LVVVKKDGRR…VYRQFGDIYS (91 aa)) is the ATP-cone domain.

Belongs to the NrdR family. Requires Zn(2+) as cofactor.

Functionally, negatively regulates transcription of bacterial ribonucleotide reductase nrd genes and operons by binding to NrdR-boxes. In Desulforamulus reducens (strain ATCC BAA-1160 / DSM 100696 / MI-1) (Desulfotomaculum reducens), this protein is Transcriptional repressor NrdR.